Reading from the N-terminus, the 204-residue chain is Recombination protein RecR (204 aa).

The segment at 57-72 (CPTCFNYTDTDICRYC) adopts a C4-type zinc-finger fold. The Toprim domain maps to 80 to 181 (ESICVVEEPS…KLSRIAHGVP (102 aa)).

The protein belongs to the RecR family.

Its function is as follows. May play a role in DNA repair. It seems to be involved in an RecBC-independent recombinational process of DNA repair. It may act with RecF and RecO. In Bdellovibrio bacteriovorus (strain ATCC 15356 / DSM 50701 / NCIMB 9529 / HD100), this protein is Recombination protein RecR.